Reading from the N-terminus, the 336-residue chain is tRNA N6-adenosine threonylcarbamoyltransferase (336 aa).

Residues His112 and His116 each coordinate Fe cation. Residues 136–140 (LVSGG), Asp169, Gly182, and Asn276 each bind substrate. Asp304 serves as a coordination point for Fe cation.

It belongs to the KAE1 / TsaD family. Fe(2+) is required as a cofactor.

It localises to the cytoplasm. It carries out the reaction L-threonylcarbamoyladenylate + adenosine(37) in tRNA = N(6)-L-threonylcarbamoyladenosine(37) in tRNA + AMP + H(+). Its function is as follows. Required for the formation of a threonylcarbamoyl group on adenosine at position 37 (t(6)A37) in tRNAs that read codons beginning with adenine. Is involved in the transfer of the threonylcarbamoyl moiety of threonylcarbamoyl-AMP (TC-AMP) to the N6 group of A37, together with TsaE and TsaB. TsaD likely plays a direct catalytic role in this reaction. In Francisella tularensis subsp. tularensis (strain FSC 198), this protein is tRNA N6-adenosine threonylcarbamoyltransferase.